The sequence spans 374 residues: Putative zinc metalloprotease R01501 (374 aa).

Histidine 26 serves as a coordination point for Zn(2+). Glutamate 27 is an active-site residue. Histidine 30 is a binding site for Zn(2+). Helical transmembrane passes span 36-55 (WSGI…LFGW), 112-134 (AATV…AVLF), 301-323 (VLNF…VPVL), and 348-367 (LAFR…AAWN). A PDZ domain is found at 126-199 (AIAIFAVLFS…LPITVRIERE (74 aa)).

It belongs to the peptidase M50B family. Zn(2+) is required as a cofactor.

It localises to the cell inner membrane. This Rhizobium meliloti (strain 1021) (Ensifer meliloti) protein is Putative zinc metalloprotease R01501.